The following is a 378-amino-acid chain: Queuine tRNA-ribosyltransferase (378 aa).

Catalysis depends on D91, which acts as the Proton acceptor. Substrate is bound by residues 91–95 (DSGGF), D145, Q189, and G216. Residues 247-253 (GVGKPED) are RNA binding. D266 serves as the catalytic Nucleophile. The RNA binding; important for wobble base 34 recognition stretch occupies residues 271–275 (TRNAR). Positions 304, 306, 309, and 335 each coordinate Zn(2+).

It belongs to the queuine tRNA-ribosyltransferase family. As to quaternary structure, homodimer. Within each dimer, one monomer is responsible for RNA recognition and catalysis, while the other monomer binds to the replacement base PreQ1. The cofactor is Zn(2+).

The enzyme catalyses 7-aminomethyl-7-carbaguanine + guanosine(34) in tRNA = 7-aminomethyl-7-carbaguanosine(34) in tRNA + guanine. The protein operates within tRNA modification; tRNA-queuosine biosynthesis. Catalyzes the base-exchange of a guanine (G) residue with the queuine precursor 7-aminomethyl-7-deazaguanine (PreQ1) at position 34 (anticodon wobble position) in tRNAs with GU(N) anticodons (tRNA-Asp, -Asn, -His and -Tyr). Catalysis occurs through a double-displacement mechanism. The nucleophile active site attacks the C1' of nucleotide 34 to detach the guanine base from the RNA, forming a covalent enzyme-RNA intermediate. The proton acceptor active site deprotonates the incoming PreQ1, allowing a nucleophilic attack on the C1' of the ribose to form the product. After dissociation, two additional enzymatic reactions on the tRNA convert PreQ1 to queuine (Q), resulting in the hypermodified nucleoside queuosine (7-(((4,5-cis-dihydroxy-2-cyclopenten-1-yl)amino)methyl)-7-deazaguanosine). This Vibrio campbellii (strain ATCC BAA-1116) protein is Queuine tRNA-ribosyltransferase.